The following is a 3063-amino-acid chain: Collagen alpha-1(XII) chain (3063 aa).

A signal peptide spans Met-1–Ala-23. Residues Pro-27–Ser-117 form the Fibronectin type-III 1 domain. The 177-residue stretch at Asp-140–Val-316 folds into the VWFA 1 domain. An O-linked (Xyl...) (chondroitin sulfate) serine glycan is attached at Ser-329. Residues Pro-336–Lys-426 enclose the Fibronectin type-III 2 domain. In terms of domain architecture, VWFA 2 spans Asp-440–Ile-616. Fibronectin type-III domains follow at residues Pro-634–Val-722, Ala-725–Asn-816, Pro-817–Arg-905, Ser-907–Asp-998, Ser-999–Phe-1087, and Ser-1089–Asp-1179. Asn-700 is a glycosylation site (N-linked (GlcNAc...) asparagine). Ser-798 is a glycosylation site (O-linked (Xyl...) (chondroitin sulfate) serine). The disordered stretch occupies residues Gly-799–Met-830. A compositionally biased stretch (basic and acidic residues) spans Glu-811–Val-822. Residues Arg-862 to Asp-864 carry the Cell attachment site motif. 2 O-linked (Xyl...) (chondroitin sulfate) serine glycosylation sites follow: Ser-889 and Ser-981. The tract at residues Arg-1077 to Thr-1099 is disordered. The segment covering Gly-1079–Thr-1099 has biased composition (polar residues). Residues Asp-1199 to Leu-1371 enclose the VWFA 3 domain. Fibronectin type-III domains follow at residues Ala-1387–Pro-1476, Val-1477–Pro-1567, Arg-1568–Pro-1658, Thr-1659–Ser-1754, Gly-1755–Asn-1849, Leu-1850–Gly-1935, Leu-1936–Ser-2026, Gly-2027–Leu-2117, Pro-2118–Asn-2206, and Val-2207–Pro-2294. A glycan (N-linked (GlcNAc...) asparagine) is linked at Asn-1763. N-linked (GlcNAc...) asparagine glycosylation occurs at Asn-2206. Residues Gly-2283–Pro-2312 form a disordered region. The segment covering Thr-2299–Pro-2311 has biased composition (pro residues). Residues Asp-2323–Leu-2496 form the VWFA 4 domain. The interval Ser-2451 to Val-2746 is nonhelical region (NC3). Residues Gly-2520 to Pro-2712 form the Laminin G-like domain. 2 N-linked (GlcNAc...) asparagine glycosylation sites follow: Asn-2528 and Asn-2679. 2 disordered regions span residues Gln-2743 to Gly-2896 and Asn-2932 to Gly-3063. 4 Collagen-like domains span residues Gly-2747 to Gly-2798, Pro-2802 to Pro-2852, Arg-2853 to Ile-2898, and Pro-2941 to Gly-2990. Positions Gly-2747 to Ile-2898 are triple-helical region (COL2) with 1 imperfection. A Cell attachment site motif is present at residues Arg-2779–Asp-2781. Residues Pro-2784–Gln-2794 show a composition bias toward pro residues. Over residues Pro-2817–Pro-2826 the composition is skewed to low complexity. 2 stretches are compositionally biased toward pro residues: residues Leu-2828–Pro-2837 and Arg-2853–Pro-2862. Positions Ser-2864–Pro-2874 are enriched in low complexity. The short motif at Arg-2895–Asp-2897 is the Cell attachment site element. Residues Ala-2899–Pro-2941 form a nonhelical region (NC2) region. Positions Pro-2941–Pro-2950 are enriched in pro residues. Residues Gly-2942–Cys-3044 are triple-helical region (COL1) with 2 imperfections. 4-hydroxyproline is present on residues Pro-2944, Pro-2947, Pro-2950, Pro-2959, Pro-2965, Pro-2968, Pro-2971, Pro-2983, Pro-3000, Pro-3003, Pro-3014, Pro-3023, Pro-3026, and Pro-3029. Residues Gly-2957–Gly-2966 are compositionally biased toward gly residues. Low complexity predominate over residues Gln-3006–Arg-3020. Residues Asp-3045 to Gly-3063 are nonhelical region (NC1).

This sequence belongs to the fibril-associated collagens with interrupted helices (FACIT) family. Trimer of identical chains each containing 190 kDa of non-triple-helical sequences. Post-translationally, the triple-helical tail is stabilized by disulfide bonds at each end. Hydroxylation on proline residues within the sequence motif, GXPG, is most likely to be 4-hydroxy as this fits the requirement for 4-hydroxylation in vertebrates. In terms of processing, isoform 1 O-glycosylation; glycosaminoglycan of chondroitin-sulfate type. Found in collagen I-containing tissues: both isoform 1 and isoform 2 appear in amnion, chorion, skeletal muscle, small intestine, and in cell culture of dermal fibroblasts, keratinocytes and endothelial cells. Only isoform 2 is found in lung, placenta, kidney and a squamous cell carcinoma cell line. Isoform 1 is also present in the corneal epithelial Bowman's membrane (BM) and the interfibrillar matrix of the corneal stroma, but it is not detected in the limbal BM.

Its subcellular location is the secreted. The protein resides in the extracellular space. The protein localises to the extracellular matrix. Its function is as follows. Type XII collagen interacts with type I collagen-containing fibrils, the COL1 domain could be associated with the surface of the fibrils, and the COL2 and NC3 domains may be localized in the perifibrillar matrix. In Homo sapiens (Human), this protein is Collagen alpha-1(XII) chain (COL12A1).